The chain runs to 206 residues: Small ribosomal subunit protein uS4 (206 aa).

The 64-residue stretch at 98 to 161 (RRLDNVVYRL…RSMELIKNNL (64 aa)) folds into the S4 RNA-binding domain.

Belongs to the universal ribosomal protein uS4 family. In terms of assembly, part of the 30S ribosomal subunit. Contacts protein S5. The interaction surface between S4 and S5 is involved in control of translational fidelity.

Its function is as follows. One of the primary rRNA binding proteins, it binds directly to 16S rRNA where it nucleates assembly of the body of the 30S subunit. In terms of biological role, with S5 and S12 plays an important role in translational accuracy. The polypeptide is Small ribosomal subunit protein uS4 (Caldanaerobacter subterraneus subsp. tengcongensis (strain DSM 15242 / JCM 11007 / NBRC 100824 / MB4) (Thermoanaerobacter tengcongensis)).